Here is a 324-residue protein sequence, read N- to C-terminus: MLKAGLKSIASYIPEKILSNADLEKIVDTTDEWITRRTGIKERRIASENENSSDLGTKAALKAIERANLKPEDIDAILVATLSPDYFTMPSTACKIASNLGLVNISAFDISAACSGFIYLLEQAKALVESGLKKNVLIVGAEKTSSIMDYNDRSICILFGDGAGAGVVSLDNENHILDVHTASNGNYGDLLMTQRSQKSSLCQTLSMQMKGNEVFKIAVNTLSNDVVEILAKNNILAQEIDLFIPHQANLRIIKAVQEKLNLSDEKCVITVQKYGNTSAASIPMAMNDAYEEGRLKKGNLILLDAFGGGFTWGSALLKFGGENF.

Catalysis depends on residues Cys-114 and His-246. The interval 247–251 (QANLR) is ACP-binding. Asn-276 is a catalytic residue.

This sequence belongs to the thiolase-like superfamily. FabH family. Homodimer.

The protein resides in the cytoplasm. The enzyme catalyses malonyl-[ACP] + acetyl-CoA + H(+) = 3-oxobutanoyl-[ACP] + CO2 + CoA. It functions in the pathway lipid metabolism; fatty acid biosynthesis. Functionally, catalyzes the condensation reaction of fatty acid synthesis by the addition to an acyl acceptor of two carbons from malonyl-ACP. Catalyzes the first condensation reaction which initiates fatty acid synthesis and may therefore play a role in governing the total rate of fatty acid production. Possesses both acetoacetyl-ACP synthase and acetyl transacylase activities. Its substrate specificity determines the biosynthesis of branched-chain and/or straight-chain of fatty acids. This chain is Beta-ketoacyl-[acyl-carrier-protein] synthase III, found in Campylobacter jejuni (strain RM1221).